The primary structure comprises 196 residues: Holliday junction branch migration complex subunit RuvA (196 aa).

A domain I region spans residues 1–62; it reads MYEYINGLIT…ENEMTLYGFI (62 aa). The tract at residues 63-141 is domain II; it reads DENEKYLFNK…DLALSAGMTV (79 aa). The tract at residues 142-146 is flexible linker; sequence ETVPT. The tract at residues 147-196 is domain III; the sequence is TDNQALADALAALESLGYSAKDVAKLQTVLANQKDTTDGYIRSALKFLVK.

It belongs to the RuvA family. Homotetramer. Forms an RuvA(8)-RuvB(12)-Holliday junction (HJ) complex. HJ DNA is sandwiched between 2 RuvA tetramers; dsDNA enters through RuvA and exits via RuvB. An RuvB hexamer assembles on each DNA strand where it exits the tetramer. Each RuvB hexamer is contacted by two RuvA subunits (via domain III) on 2 adjacent RuvB subunits; this complex drives branch migration. In the full resolvosome a probable DNA-RuvA(4)-RuvB(12)-RuvC(2) complex forms which resolves the HJ.

The protein resides in the cytoplasm. Functionally, the RuvA-RuvB-RuvC complex processes Holliday junction (HJ) DNA during genetic recombination and DNA repair, while the RuvA-RuvB complex plays an important role in the rescue of blocked DNA replication forks via replication fork reversal (RFR). RuvA specifically binds to HJ cruciform DNA, conferring on it an open structure. The RuvB hexamer acts as an ATP-dependent pump, pulling dsDNA into and through the RuvAB complex. HJ branch migration allows RuvC to scan DNA until it finds its consensus sequence, where it cleaves and resolves the cruciform DNA. The sequence is that of Holliday junction branch migration complex subunit RuvA from Leuconostoc citreum (strain KM20).